The following is a 140-amino-acid chain: MPPKAAEKKPSTGGKAPAGKAPAEKKEAGKKTAAAASGDKKKRGKTRKETYSSYIYKVLKQVHPDTGISTRAMSILNSFVNDIFERVATEASKLAAYNKKSTISSREIQTSVRLILPGELAKHAVSEGTKAVTKYSSSAK.

The segment covering 1 to 10 (MPPKAAEKKP) has biased composition (basic and acidic residues). A disordered region spans residues 1-48 (MPPKAAEKKPSTGGKAPAGKAPAEKKEAGKKTAAAASGDKKKRGKTRK). 2 positions are modified to N6-acetyllysine; alternate: Lys-8 and Lys-9. Glycyl lysine isopeptide (Lys-Gly) (interchain with G-Cter in SUMO); alternate cross-links involve residues Lys-8 and Lys-9. Low complexity predominate over residues 11–21 (STGGKAPAGKA). Lys-15 bears the N6-acetyllysine mark. The residue at position 25 (Lys-25) is an N6-acetyllysine; alternate. Lys-25 is covalently cross-linked (Glycyl lysine isopeptide (Lys-Gly) (interchain with G-Cter in SUMO); alternate). Lys-26 participates in a covalent cross-link: Glycyl lysine isopeptide (Lys-Gly) (interchain with G-Cter in SUMO). Lys-134 is covalently cross-linked (Glycyl lysine isopeptide (Lys-Gly) (interchain with G-Cter in ubiquitin)).

This sequence belongs to the histone H2B family. The nucleosome is a histone octamer containing two molecules each of H2A, H2B, H3 and H4 assembled in one H3-H4 heterotetramer and two H2A-H2B heterodimers. The octamer wraps approximately 147 bp of DNA. Monoubiquitinated by the ubc2-bre1 complex to form H2BK123ub1. H2BK123ub1 gives a specific tag for epigenetic transcriptional activation and is also prerequisite for H3K4me and H3K79me formation. H2BK123ub1 also modulates the formation of double-strand breaks during meiosis and is a prerequisite for DNA-damage checkpoint activation. In terms of processing, acetylated by gcn5 to form H2BK11ac and H2BK16ac. H2BK16ac can also be formed by esa1. Acetylation of N-terminal lysines and particularly formation of H2BK11acK16ac has a positive effect on transcription. Post-translationally, sumoylation to form H2BK6su or H2BK7su, and probably also H2BK16su or H2BK17su, occurs preferentially near the telomeres and represses gene transcription.

Its subcellular location is the nucleus. It localises to the chromosome. Functionally, core component of nucleosome. Nucleosomes wrap and compact DNA into chromatin, limiting DNA accessibility to the cellular machineries which require DNA as a template. Histones thereby play a central role in transcription regulation, DNA repair, DNA replication and chromosomal stability. DNA accessibility is regulated via a complex set of post-translational modifications of histones, also called histone code, and nucleosome remodeling. In Aspergillus clavatus (strain ATCC 1007 / CBS 513.65 / DSM 816 / NCTC 3887 / NRRL 1 / QM 1276 / 107), this protein is Histone H2B (htb1).